We begin with the raw amino-acid sequence, 256 residues long: Thiazole synthase (256 aa).

The active-site Schiff-base intermediate with DXP is the Lys-96. 1-deoxy-D-xylulose 5-phosphate is bound by residues Gly-157, 183-184, and 205-206; these read AG and NT.

This sequence belongs to the ThiG family. Homotetramer. Forms heterodimers with either ThiH or ThiS.

The protein localises to the cytoplasm. It carries out the reaction [ThiS sulfur-carrier protein]-C-terminal-Gly-aminoethanethioate + 2-iminoacetate + 1-deoxy-D-xylulose 5-phosphate = [ThiS sulfur-carrier protein]-C-terminal Gly-Gly + 2-[(2R,5Z)-2-carboxy-4-methylthiazol-5(2H)-ylidene]ethyl phosphate + 2 H2O + H(+). It participates in cofactor biosynthesis; thiamine diphosphate biosynthesis. Catalyzes the rearrangement of 1-deoxy-D-xylulose 5-phosphate (DXP) to produce the thiazole phosphate moiety of thiamine. Sulfur is provided by the thiocarboxylate moiety of the carrier protein ThiS. In vitro, sulfur can be provided by H(2)S. In Clostridioides difficile (strain 630) (Peptoclostridium difficile), this protein is Thiazole synthase.